Reading from the N-terminus, the 286-residue chain is Aminoglycoside N(3)-acetyltransferase III (286 aa).

It belongs to the antibiotic N-acetyltransferase family.

It carries out the reaction a 2-deoxystreptamine antibiotic + acetyl-CoA = an N(3)-acetyl-2-deoxystreptamine antibiotic + CoA + H(+). Its function is as follows. Resistance to antibiotics containing the 2-deoxy-streptamine ring including gentamicin, kanamycin, tobramycin, neomycin and apramycin. The polypeptide is Aminoglycoside N(3)-acetyltransferase III (aacC3) (Salmonella sp).